The sequence spans 181 residues: ATP-dependent protease subunit HslV (181 aa).

The active site involves Thr7. Na(+) is bound by residues Ala162, Cys165, and Thr168.

It belongs to the peptidase T1B family. HslV subfamily. As to quaternary structure, a double ring-shaped homohexamer of HslV is capped on each side by a ring-shaped HslU homohexamer. The assembly of the HslU/HslV complex is dependent on binding of ATP.

Its subcellular location is the cytoplasm. The catalysed reaction is ATP-dependent cleavage of peptide bonds with broad specificity.. With respect to regulation, allosterically activated by HslU binding. In terms of biological role, protease subunit of a proteasome-like degradation complex believed to be a general protein degrading machinery. The protein is ATP-dependent protease subunit HslV of Coxiella burnetii (strain RSA 331 / Henzerling II).